We begin with the raw amino-acid sequence, 186 residues long: Mediator of RNA polymerase II transcription subunit 29 (186 aa).

Positions 1–12 (MAMLLNQAQPPQ) are enriched in polar residues. Positions 1 to 41 (MAMLLNQAQPPQTRDGGGTQGASLGPGVPVGQQQLGLQQQQ) are disordered. Low complexity predominate over residues 25–41 (GPGVPVGQQQLGLQQQQ).

Belongs to the Mediator complex subunit 29 family. In terms of assembly, component of the Mediator complex.

Its subcellular location is the nucleus. Component of the Mediator complex, a coactivator involved in the regulated transcription of nearly all RNA polymerase II-dependent genes. Mediator functions as a bridge to convey information from gene-specific regulatory proteins to the basal RNA polymerase II transcription machinery. Mediator is recruited to promoters by direct interactions with regulatory proteins and serves as a scaffold for the assembly of a functional preinitiation complex with RNA polymerase II and the general transcription factors. The chain is Mediator of RNA polymerase II transcription subunit 29 (med29) from Xenopus laevis (African clawed frog).